A 95-amino-acid polypeptide reads, in one-letter code: DNA-directed RNA polymerase subunit Rpo6 (95 aa).

Belongs to the archaeal Rpo6/eukaryotic RPB6 RNA polymerase subunit family. In terms of assembly, part of the 13-subunit RNA polymerase complex.

The protein localises to the cytoplasm. It carries out the reaction RNA(n) + a ribonucleoside 5'-triphosphate = RNA(n+1) + diphosphate. Its function is as follows. DNA-dependent RNA polymerase (RNAP) catalyzes the transcription of DNA into RNA using the four ribonucleoside triphosphates as substrates. The protein is DNA-directed RNA polymerase subunit Rpo6 of Saccharolobus solfataricus (strain ATCC 35092 / DSM 1617 / JCM 11322 / P2) (Sulfolobus solfataricus).